The following is a 919-amino-acid chain: Glutamate receptor ionotropic, kainate 3 (919 aa).

The N-terminal stretch at 1–31 (MTAPWRRLRSLVWEYWAGFLVCAFWIPDSRG) is a signal peptide. The Extracellular portion of the chain corresponds to 32 to 563 (MPHVIRIGGI…VFSFLNPLSP (532 aa)). Asn-70, Asn-76, Asn-278, Asn-381, Asn-415, Asn-426, and Asn-433 each carry an N-linked (GlcNAc...) asparagine glycan. An intrachain disulfide couples Cys-99 to Cys-350. Residues Pro-518, Thr-520, and Arg-525 each contribute to the L-glutamate site. 2 N-linked (GlcNAc...) asparagine glycosylation sites follow: Asn-548 and Asn-551. The chain crosses the membrane as a helical span at residues 564–584 (DIWMYVLLAYLGVSCVLFVIA). The Cytoplasmic portion of the chain corresponds to 585–636 (RFSPYEWYDAHPCNPGSEVVENNFTLLNSFWFGMGSLMQQGSELMPKALSTR). A helical transmembrane segment spans residues 637–657 (IIGGIWWFFTLIIISSYTANL). The Extracellular portion of the chain corresponds to 658-820 (AAFLTVERME…KEASALGIQK (163 aa)). Residues Ala-691, Thr-692, and Glu-739 each coordinate L-glutamate. An N-linked (GlcNAc...) asparagine glycan is attached at Asn-752. Residues 821–841 (IGGIFIVLAAGLVLSVLVAVG) form a helical membrane-spanning segment. Topologically, residues 842 to 919 (EFIYKLRKTA…CSTSLAPVFP (78 aa)) are cytoplasmic. Ser-869 is subject to Phosphoserine. A Glycyl lysine isopeptide (Lys-Gly) (interchain with G-Cter in SUMO1) cross-link involves residue Lys-887.

Belongs to the glutamate-gated ion channel (TC 1.A.10.1) family. GRIK3 subfamily. Homotetramer, and heterotetramer with GRIK4 or GRIK5. Can form functional heteromeric receptors with GRIK2. Interacts with PRKCABP. Interacts with NETO2. In terms of assembly, homomeric GluR7A forms functional kainate receptors which have very low sensitivity to glutamate. Can form functional heteromeric receptors with GRIK4 and GRIK5. As to quaternary structure, homomeric GluR7B forms functional kainate receptors. In terms of processing, mass spectrometry data suggest the protein is N-glycosylated at five distinct sites. In terms of tissue distribution, expressed in the olfactory bulb (at protein level). Expressed in the deep cortical layers, dentate gyrus, reticular thalamic nucleus, mammillary bodies, pons, and cerebellum of the adult.

It is found in the cell membrane. The protein resides in the postsynaptic cell membrane. It catalyses the reaction Ca(2+)(in) = Ca(2+)(out). Functionally, ionotropic glutamate receptor that functions as a cation-permeable ligand-gated ion channel, gated by L-glutamate and the glutamatergic agonist kainic acid. Binding of the excitatory neurotransmitter L-glutamate induces a conformation change, leading to the opening of the cation channel, and thereby converts the chemical signal to an electrical impulse. The receptor then desensitizes rapidly and enters a transient inactive state, characterized by the presence of bound agonist. In association with GRIK2, involved in presynaptic facilitation of glutamate release at hippocampal mossy fiber synapses. Ionotropic glutamate receptor that functions as a ligand-gated cation channel, gated by L-glutamate and the glutamatergic agonist kainic acid. The polypeptide is Glutamate receptor ionotropic, kainate 3 (Grik3) (Rattus norvegicus (Rat)).